We begin with the raw amino-acid sequence, 255 residues long: Ornithine decarboxylase antizyme (255 aa).

It belongs to the ODC antizyme family. In terms of assembly, interacts with ODC and thereby sterically blocks ODC homodimerization.

Its function is as follows. Ornithine decarboxylase (ODC) antizyme protein that negatively regulates ODC activity and intracellular polyamine biosynthesis in response to increased intracellular polyamine levels. Binds to ODC monomers, inhibiting the assembly of the functional ODC homodimer, and targets the monomers for ubiquitin-independent proteolytic destruction by the 26S proteasome. This is Ornithine decarboxylase antizyme (OAZ1) from Candida glabrata (strain ATCC 2001 / BCRC 20586 / JCM 3761 / NBRC 0622 / NRRL Y-65 / CBS 138) (Yeast).